The following is a 296-amino-acid chain: 4-hydroxybenzoate octaprenyltransferase (296 aa).

8 helical membrane-spanning segments follow: residues 23–43 (IGIL…SPGW), 46–66 (GLVL…GCVM), 99–119 (LALA…PLVV), 141–161 (IPQA…FAAI), 163–183 (GQLP…AIAY), 211–231 (DVFA…WVGV), 237–257 (WPYF…YALI), and 265–285 (CFKA…GVLA).

The protein belongs to the UbiA prenyltransferase family. Mg(2+) serves as cofactor.

Its subcellular location is the cell inner membrane. It catalyses the reaction all-trans-octaprenyl diphosphate + 4-hydroxybenzoate = 4-hydroxy-3-(all-trans-octaprenyl)benzoate + diphosphate. It participates in cofactor biosynthesis; ubiquinone biosynthesis. In terms of biological role, catalyzes the prenylation of para-hydroxybenzoate (PHB) with an all-trans polyprenyl group. Mediates the second step in the final reaction sequence of ubiquinone-8 (UQ-8) biosynthesis, which is the condensation of the polyisoprenoid side chain with PHB, generating the first membrane-bound Q intermediate 3-octaprenyl-4-hydroxybenzoate. The sequence is that of 4-hydroxybenzoate octaprenyltransferase from Methylobacillus flagellatus (strain ATCC 51484 / DSM 6875 / VKM B-1610 / KT).